The chain runs to 545 residues: Hsk1-interacting molecule 1 (545 aa).

The segment at 492–541 adopts a DBF4-type zinc-finger fold; that stretch reads VDAKPGYCENCREKFDNFESHIRSSRHRRFAENNDNFKDLDELFALVQRP. The Zn(2+) site is built by C499, C502, H512, and H518.

Associates with hsk1. Interacts with mcm10. Post-translationally, hyperphosphorylated at the G1/S and S-phases of the cell cycle.

The protein localises to the nucleus. Functionally, activates hsk1 kinase and is essential for G1/S transition. Has a role in S-phase checkpoint control induced by replication fork blocks after nucleotide deprivation and DNA damage. This is Hsk1-interacting molecule 1 (him1) from Schizosaccharomyces pombe (strain 972 / ATCC 24843) (Fission yeast).